Reading from the N-terminus, the 289-residue chain is Lipoyl synthase 1 (289 aa).

Cys33, Cys38, Cys44, Cys59, Cys63, Cys66, and Ser274 together coordinate [4Fe-4S] cluster. The Radical SAM core domain occupies Phe45–Leu263.

Belongs to the radical SAM superfamily. Lipoyl synthase family. Requires [4Fe-4S] cluster as cofactor.

It localises to the cytoplasm. It carries out the reaction [[Fe-S] cluster scaffold protein carrying a second [4Fe-4S](2+) cluster] + N(6)-octanoyl-L-lysyl-[protein] + 2 oxidized [2Fe-2S]-[ferredoxin] + 2 S-adenosyl-L-methionine + 4 H(+) = [[Fe-S] cluster scaffold protein] + N(6)-[(R)-dihydrolipoyl]-L-lysyl-[protein] + 4 Fe(3+) + 2 hydrogen sulfide + 2 5'-deoxyadenosine + 2 L-methionine + 2 reduced [2Fe-2S]-[ferredoxin]. Its pathway is protein modification; protein lipoylation via endogenous pathway; protein N(6)-(lipoyl)lysine from octanoyl-[acyl-carrier-protein]: step 2/2. Catalyzes the radical-mediated insertion of two sulfur atoms into the C-6 and C-8 positions of the octanoyl moiety bound to the lipoyl domains of lipoate-dependent enzymes, thereby converting the octanoylated domains into lipoylated derivatives. The polypeptide is Lipoyl synthase 1 (Parasynechococcus marenigrum (strain WH8102)).